The sequence spans 141 residues: Nucleoside diphosphate kinase (141 aa).

6 residues coordinate ATP: Lys-11, Phe-59, Arg-87, Thr-93, Arg-104, and Asn-114. Residue His-117 is the Pros-phosphohistidine intermediate of the active site.

This sequence belongs to the NDK family. Homotetramer. Mg(2+) is required as a cofactor.

It localises to the cytoplasm. The enzyme catalyses a 2'-deoxyribonucleoside 5'-diphosphate + ATP = a 2'-deoxyribonucleoside 5'-triphosphate + ADP. It catalyses the reaction a ribonucleoside 5'-diphosphate + ATP = a ribonucleoside 5'-triphosphate + ADP. Major role in the synthesis of nucleoside triphosphates other than ATP. The ATP gamma phosphate is transferred to the NDP beta phosphate via a ping-pong mechanism, using a phosphorylated active-site intermediate. The sequence is that of Nucleoside diphosphate kinase from Methylibium petroleiphilum (strain ATCC BAA-1232 / LMG 22953 / PM1).